A 318-amino-acid polypeptide reads, in one-letter code: Acetyl-coenzyme A carboxylase carboxyl transferase subunit alpha (318 aa).

The CoA carboxyltransferase C-terminal domain maps to 32-293 (DLSQEIESLE…KKALQKHLGE (262 aa)).

The protein belongs to the AccA family. In terms of assembly, acetyl-CoA carboxylase is a heterohexamer composed of biotin carboxyl carrier protein (AccB), biotin carboxylase (AccC) and two subunits each of ACCase subunit alpha (AccA) and ACCase subunit beta (AccD).

The protein resides in the cytoplasm. It catalyses the reaction N(6)-carboxybiotinyl-L-lysyl-[protein] + acetyl-CoA = N(6)-biotinyl-L-lysyl-[protein] + malonyl-CoA. The protein operates within lipid metabolism; malonyl-CoA biosynthesis; malonyl-CoA from acetyl-CoA: step 1/1. In terms of biological role, component of the acetyl coenzyme A carboxylase (ACC) complex. First, biotin carboxylase catalyzes the carboxylation of biotin on its carrier protein (BCCP) and then the CO(2) group is transferred by the carboxyltransferase to acetyl-CoA to form malonyl-CoA. This chain is Acetyl-coenzyme A carboxylase carboxyl transferase subunit alpha, found in Syntrophomonas wolfei subsp. wolfei (strain DSM 2245B / Goettingen).